The following is an 867-amino-acid chain: 2-methylcitrate dehydratase (2-methyl-trans-aconitate forming) (867 aa).

[4Fe-4S] cluster is bound by residues cysteine 410, cysteine 476, and cysteine 479.

It belongs to the aconitase/IPM isomerase family. [4Fe-4S] cluster is required as a cofactor.

It carries out the reaction (2S,3S)-2-methylcitrate = 2-methyl-trans-aconitate + H2O. The catalysed reaction is citrate = D-threo-isocitrate. It participates in organic acid metabolism; propanoate degradation. Inhibited by ferricyanide and EDTA. Its function is as follows. Involved in the catabolism of short chain fatty acids (SCFA) via the 2-methylcitrate cycle II (propionate degradation route). In vivo under anaerobic conditions, AcnD catalyzes the stereospecific dehydration of (2S,3S)-methylcitrate (2-MC) to yield the trans isomer of 2-methyl-aconitate (2-MCA). AcnD can also accept citrate and cis-aconitate, but with a lower efficiency. 2-methylisocitrate and isocitrate are not substrates. The chain is 2-methylcitrate dehydratase (2-methyl-trans-aconitate forming) (acnD) from Shewanella oneidensis (strain ATCC 700550 / JCM 31522 / CIP 106686 / LMG 19005 / NCIMB 14063 / MR-1).